We begin with the raw amino-acid sequence, 90 residues long: uncharacterized protein (90 aa).

The stretch at 36–82 (DQEYSDAQMQLEDAVNALNKLWLSSNDQQREQLYRMRLQLQSLQNNM) forms a coiled coil.

This is an uncharacterized protein from Bacillus subtilis (strain 168).